The following is a 180-amino-acid chain: MTLKELLVGFGTQVRSIWMIGLHAFAKRETRMYPEEPVYLPPRYRGRIVLTRDPDGEERCVACNLCAVACPVGCISLQKAETKDGRWYPEFFRINFSRCIFCGLCEEACPTTAIQLTPDFELGEYKRQDLVYEKEDLLISGPGKYPEYNFYRMAGMAIDGKDKGEAENEAKPIDVKSLLP.

2 4Fe-4S ferredoxin-type domains span residues 50–80 (LTRDPDGEERCVACNLCAVACPVGCISLQKA) and 90–119 (EFFRINFSRCIFCGLCEEACPTTAIQLTPD). Residues C60, C63, C66, C70, C99, C102, C105, and C109 each coordinate [4Fe-4S] cluster.

It belongs to the complex I 23 kDa subunit family. As to quaternary structure, NDH-1 is composed of 13 different subunits. Subunits NuoA, H, J, K, L, M, N constitute the membrane sector of the complex. [4Fe-4S] cluster serves as cofactor.

The protein resides in the cell inner membrane. It catalyses the reaction a quinone + NADH + 5 H(+)(in) = a quinol + NAD(+) + 4 H(+)(out). NDH-1 shuttles electrons from NADH, via FMN and iron-sulfur (Fe-S) centers, to quinones in the respiratory chain. The immediate electron acceptor for the enzyme in this species is believed to be ubiquinone. Couples the redox reaction to proton translocation (for every two electrons transferred, four hydrogen ions are translocated across the cytoplasmic membrane), and thus conserves the redox energy in a proton gradient. In Salmonella choleraesuis (strain SC-B67), this protein is NADH-quinone oxidoreductase subunit I.